The following is a 204-amino-acid chain: Guanylate kinase (204 aa).

One can recognise a Guanylate kinase-like domain in the interval 18–196 (PKLFTISAPA…SYEILKSIFI (179 aa)). 25-32 (APAGAGKT) contributes to the ATP binding site.

This sequence belongs to the guanylate kinase family.

The protein resides in the cytoplasm. The catalysed reaction is GMP + ATP = GDP + ADP. Essential for recycling GMP and indirectly, cGMP. This Chlamydia caviae (strain ATCC VR-813 / DSM 19441 / 03DC25 / GPIC) (Chlamydophila caviae) protein is Guanylate kinase.